We begin with the raw amino-acid sequence, 57 residues long: MLTWALTFFVLGVIAAVFGFGGVIGVAASIAKVIFLLCVAFVVLFSVLAFKQHKRHK.

2 consecutive transmembrane segments (helical) span residues F8–A28 and I30–F50.

This sequence belongs to the UPF0391 family.

It is found in the cell membrane. The polypeptide is UPF0391 membrane protein Patl_0263 (Pseudoalteromonas atlantica (strain T6c / ATCC BAA-1087)).